Here is a 120-residue protein sequence, read N- to C-terminus: Large ribosomal subunit protein uL18 (120 aa).

This sequence belongs to the universal ribosomal protein uL18 family. In terms of assembly, part of the 50S ribosomal subunit; part of the 5S rRNA/L5/L18/L25 subcomplex. Contacts the 5S and 23S rRNAs.

In terms of biological role, this is one of the proteins that bind and probably mediate the attachment of the 5S RNA into the large ribosomal subunit, where it forms part of the central protuberance. This Nitrobacter hamburgensis (strain DSM 10229 / NCIMB 13809 / X14) protein is Large ribosomal subunit protein uL18.